The following is a 393-amino-acid chain: Putative N(4)-(beta-N-acetylglucosaminyl)-L-asparaginase CG1827 (393 aa).

The signal sequence occupies residues Met-1–Ala-23. N-linked (GlcNAc...) asparagine glycans are attached at residues Asn-49 and Asn-64. 2 cysteine pairs are disulfide-bonded: Cys-97-Cys-102 and Cys-196-Cys-212. Thr-243 functions as the Nucleophile in the catalytic mechanism. Residues Arg-271–Asp-274 and Thr-294–Gly-297 contribute to the substrate site. A disulfide bridge connects residues Cys-354 and Cys-381.

It belongs to the Ntn-hydrolase family. In terms of assembly, heterotetramer of two alpha and two beta chains arranged as a dimer of alpha/beta heterodimers. Cleaved into an alpha and beta chain by autocatalysis; this activates the enzyme. The N-terminal residue of the beta subunit is responsible for the nucleophile hydrolase activity.

The catalysed reaction is N(4)-(beta-N-acetyl-D-glucosaminyl)-L-asparagine + H2O = N-acetyl-beta-D-glucosaminylamine + L-aspartate + H(+). Functionally, cleaves the GlcNAc-Asn bond which joins oligosaccharides to the peptide of asparagine-linked glycoproteins. The protein is Putative N(4)-(beta-N-acetylglucosaminyl)-L-asparaginase CG1827 of Drosophila melanogaster (Fruit fly).